Here is a 288-residue protein sequence, read N- to C-terminus: CBY1-interacting BAR domain-containing protein 2 (288 aa).

Residues 6–217 are BAR-like; sequence SRDSQVRVME…ESYDLEKDLE (212 aa). Disordered stretches follow at residues 133-157 and 256-288; these read QKSP…VDAS and TIRS…RLNQ. A compositionally biased stretch (polar residues) spans 138-157; the sequence is DRQTISQAETSVQRASVDAS. A compositionally biased stretch (acidic residues) spans 266–276; sequence SEDDSAEEDPV.

This sequence belongs to the CIBAR family. In terms of assembly, homodimer (via BAR-like domain). Heterodimer (via BAR-like domain) with FAM92A. Interacts with CBY1.

It localises to the cytoplasm. It is found in the cytoskeleton. The protein localises to the microtubule organizing center. The protein resides in the centrosome. Its subcellular location is the centriole. It localises to the cilium basal body. Functionally, may play a role in ciliogenesis. In cooperation with CBY1 may facilitate ciliogenesis likely by the recruitment and fusion of endosomal vesicles at distal appendages during early stages of ciliogenesis. This is CBY1-interacting BAR domain-containing protein 2 (CIBAR2) from Bos taurus (Bovine).